A 138-amino-acid polypeptide reads, in one-letter code: Prefoldin subunit alpha (138 aa).

This sequence belongs to the prefoldin subunit alpha family. In terms of assembly, heterohexamer of two alpha and four beta subunits.

The protein resides in the cytoplasm. Its function is as follows. Molecular chaperone capable of stabilizing a range of proteins. Seems to fulfill an ATP-independent, HSP70-like function in archaeal de novo protein folding. The sequence is that of Prefoldin subunit alpha from Methanococcoides burtonii (strain DSM 6242 / NBRC 107633 / OCM 468 / ACE-M).